We begin with the raw amino-acid sequence, 76 residues long: Acyl carrier protein (76 aa).

The region spanning 2–76 (SDIAERVKKI…QAIDYIQSHT (75 aa)) is the Carrier domain. Serine 36 carries the post-translational modification O-(pantetheine 4'-phosphoryl)serine.

The protein belongs to the acyl carrier protein (ACP) family. Post-translationally, 4'-phosphopantetheine is transferred from CoA to a specific serine of apo-ACP by AcpS. This modification is essential for activity because fatty acids are bound in thioester linkage to the sulfhydryl of the prosthetic group.

The protein resides in the cytoplasm. The protein operates within lipid metabolism; fatty acid biosynthesis. Its function is as follows. Carrier of the growing fatty acid chain in fatty acid biosynthesis. The sequence is that of Acyl carrier protein from Methylococcus capsulatus (strain ATCC 33009 / NCIMB 11132 / Bath).